The primary structure comprises 153 residues: Pheromone-binding protein Gp-9 (153 aa).

The signal sequence occupies residues 1–19 (MKTFVLHIFIFALVAFASA). 3 cysteine pairs are disulfide-bonded: Cys37–Cys77, Cys73–Cys129, and Cys118–Cys138.

Belongs to the PBP/GOBP family. As to quaternary structure, homodimer.

The protein localises to the secreted. Colony queen number, a major feature of social organization, is associated with worker genotype for Gp-9. Colonies are headed by either a single reproductive queen (monogyne form) or multiple queens (polygyne form). Differences in worker Gp-9 genotypes between social forms may cause differences in workers' abilities to recognize queens and regulate their numbers. This Solenopsis saevissima (Fire ant) protein is Pheromone-binding protein Gp-9.